The primary structure comprises 200 residues: RNA-binding protein with multiple splicing 2 (200 aa).

The 78-residue stretch at R22 to A99 folds into the RRM domain. The segment at D32–F42 is important for homodimerization.

In terms of assembly, homodimer. Expressed in developing heart.

The protein resides in the cytoplasm. Its subcellular location is the nucleus. It localises to the stress granule. In terms of biological role, RNA-binding protein involved in the regulation of smooth muscle cell differentiation and proliferation in the gastrointestinal system. Binds NOG mRNA, the major inhibitor of the bone morphogenetic protein (BMP) pathway. Mediates an increase of NOG mRNA levels, thereby contributing to the negative regulation of BMP signaling pathway and promoting reversible dedifferentiation and proliferation of smooth muscle cells. Acts as a pre-mRNA alternative splicing regulator. Mediates ACTN1 and FLNB alternative splicing. Likely binds to mRNA tandem CAC trinucleotide or CA dinucleotide motifs. In Gallus gallus (Chicken), this protein is RNA-binding protein with multiple splicing 2.